We begin with the raw amino-acid sequence, 201 residues long: Small ribosomal subunit protein uS4c (201 aa).

The interval 23–42 (SKKPRAGSNLRNQLRPGKKS) is disordered. The 63-residue stretch at 89 to 151 (MRLDNILFRL…QKSKSLVQNY (63 aa)) folds into the S4 RNA-binding domain.

It belongs to the universal ribosomal protein uS4 family. Part of the 30S ribosomal subunit. Contacts protein S5. The interaction surface between S4 and S5 is involved in control of translational fidelity.

The protein localises to the plastid. It is found in the chloroplast. In terms of biological role, one of the primary rRNA binding proteins, it binds directly to 16S rRNA where it nucleates assembly of the body of the 30S subunit. With S5 and S12 plays an important role in translational accuracy. In Morus indica (Mulberry), this protein is Small ribosomal subunit protein uS4c (rps4).